We begin with the raw amino-acid sequence, 217 residues long: Small ribosomal subunit protein uS3 (217 aa).

Residues 40-110 (IRDLINKGFN…EVYINIHEVR (71 aa)) form the KH type-2 domain.

The protein belongs to the universal ribosomal protein uS3 family. Part of the 30S ribosomal subunit. Forms a tight complex with proteins S10 and S14.

Binds the lower part of the 30S subunit head. Binds mRNA in the 70S ribosome, positioning it for translation. This Rickettsia felis (strain ATCC VR-1525 / URRWXCal2) (Rickettsia azadi) protein is Small ribosomal subunit protein uS3.